The primary structure comprises 372 residues: Glutamine synthetase (372 aa).

One can recognise a GS beta-grasp domain in the interval I26–G105. Residues H112–L372 enclose the GS catalytic domain.

The protein belongs to the glutamine synthetase family. In terms of assembly, homooctamer.

The protein resides in the cytoplasm. The enzyme catalyses L-glutamate + NH4(+) + ATP = L-glutamine + ADP + phosphate + H(+). This is Glutamine synthetase (GLN1) from Kluyveromyces lactis (strain ATCC 8585 / CBS 2359 / DSM 70799 / NBRC 1267 / NRRL Y-1140 / WM37) (Yeast).